A 237-amino-acid chain; its full sequence is Urease accessory protein UreF (237 aa).

Belongs to the UreF family. In terms of assembly, ureD, UreF and UreG form a complex that acts as a GTP-hydrolysis-dependent molecular chaperone, activating the urease apoprotein by helping to assemble the nickel containing metallocenter of UreC. The UreE protein probably delivers the nickel.

It localises to the cytoplasm. Its function is as follows. Required for maturation of urease via the functional incorporation of the urease nickel metallocenter. This chain is Urease accessory protein UreF, found in Rhodopseudomonas palustris (strain HaA2).